A 419-amino-acid chain; its full sequence is Serine hydroxymethyltransferase (419 aa).

(6S)-5,6,7,8-tetrahydrofolate is bound by residues leucine 121 and 125–127 (GHL). Lysine 230 bears the N6-(pyridoxal phosphate)lysine mark. 355-357 (SPF) contacts (6S)-5,6,7,8-tetrahydrofolate.

It belongs to the SHMT family. As to quaternary structure, homodimer. The cofactor is pyridoxal 5'-phosphate.

It is found in the cytoplasm. It catalyses the reaction (6R)-5,10-methylene-5,6,7,8-tetrahydrofolate + glycine + H2O = (6S)-5,6,7,8-tetrahydrofolate + L-serine. It participates in one-carbon metabolism; tetrahydrofolate interconversion. Its pathway is amino-acid biosynthesis; glycine biosynthesis; glycine from L-serine: step 1/1. In terms of biological role, catalyzes the reversible interconversion of serine and glycine with tetrahydrofolate (THF) serving as the one-carbon carrier. This reaction serves as the major source of one-carbon groups required for the biosynthesis of purines, thymidylate, methionine, and other important biomolecules. Also exhibits THF-independent aldolase activity toward beta-hydroxyamino acids, producing glycine and aldehydes, via a retro-aldol mechanism. The protein is Serine hydroxymethyltransferase of Alkalilimnicola ehrlichii (strain ATCC BAA-1101 / DSM 17681 / MLHE-1).